Consider the following 865-residue polypeptide: Leucine-rich repeat-containing protein 66 (865 aa).

A helical membrane pass occupies residues 4 to 24; that stretch reads FYARVTVMVTGLCFVGTVTNP. Residue N42 is glycosylated (N-linked (GlcNAc...) asparagine). LRR repeat units follow at residues 138–160, 161–182, 185–206, 209–230, and 235–255; these read RLKVLLLQRNQLGPTPKGLWKLK, PLCSLDLSFNRRVGIGLSGFHG, QLKSIYLKNNKILTIHPEAFKG, KLQVVDLRSSALTMLVPIVTIA, and NLELGLADNQWQCNESDANFQ. The N-linked (GlcNAc...) asparagine glycan is linked to N248. A helical membrane pass occupies residues 366-386; it reads ALAVCLSVFITFVVAFCLGAF. 2 disordered regions span residues 463–522 and 654–749; these read RMLG…PGQH and DTPS…AESV. Over residues 470–479 the composition is skewed to polar residues; it reads MDPSSQQSPG. Over residues 675-688 the composition is skewed to basic and acidic residues; the sequence is AVQRDASFDPHDDL. Polar residues predominate over residues 702 to 713; sequence FTLSSEGSQDTR. Phosphoserine is present on residues S714 and S748. Residues 728-759 enclose the LRRNT domain; the sequence is SQPLPSRNLGEYKDSVTSAESVEDITSQQTLE. Residue N787 is glycosylated (N-linked (GlcNAc...) asparagine). The interval 840 to 865 is disordered; the sequence is FPNIDSSPSPPCSDQDPSDPEEHDTK. The segment covering 855 to 865 has biased composition (acidic residues); sequence DPSDPEEHDTK.

The protein localises to the membrane. This Rattus norvegicus (Rat) protein is Leucine-rich repeat-containing protein 66 (Lrrc66).